The primary structure comprises 203 residues: LexA repressor 2 (203 aa).

The H-T-H motif DNA-binding region spans 28-48 (MREIARHLNVNGTLGVAKHLE). Catalysis depends on for autocatalytic cleavage activity residues Ser122 and Lys159.

Belongs to the peptidase S24 family. As to quaternary structure, homodimer.

The enzyme catalyses Hydrolysis of Ala-|-Gly bond in repressor LexA.. Functionally, represses a number of genes involved in the response to DNA damage (SOS response), including recA and lexA. In the presence of single-stranded DNA, RecA interacts with LexA causing an autocatalytic cleavage which disrupts the DNA-binding part of LexA, leading to derepression of the SOS regulon and eventually DNA repair. The protein is LexA repressor 2 of Geobacter sulfurreducens (strain ATCC 51573 / DSM 12127 / PCA).